Consider the following 420-residue polypeptide: Multifunctional CCA protein (420 aa).

Positions 8 and 11 each coordinate ATP. Residues glycine 8 and arginine 11 each coordinate CTP. Mg(2+) contacts are provided by aspartate 21 and aspartate 23. The ATP site is built by arginine 91, arginine 137, and arginine 140. Residues arginine 91, arginine 137, and arginine 140 each contribute to the CTP site. Residues 228–334 enclose the HD domain; sequence TFVHTMLVLQ…LKLFNRLDVW (107 aa).

The protein belongs to the tRNA nucleotidyltransferase/poly(A) polymerase family. Bacterial CCA-adding enzyme type 1 subfamily. Monomer. Can also form homodimers and oligomers. The cofactor is Mg(2+). Requires Ni(2+) as cofactor.

The catalysed reaction is a tRNA precursor + 2 CTP + ATP = a tRNA with a 3' CCA end + 3 diphosphate. It catalyses the reaction a tRNA with a 3' CCA end + 2 CTP + ATP = a tRNA with a 3' CCACCA end + 3 diphosphate. Functionally, catalyzes the addition and repair of the essential 3'-terminal CCA sequence in tRNAs without using a nucleic acid template. Adds these three nucleotides in the order of C, C, and A to the tRNA nucleotide-73, using CTP and ATP as substrates and producing inorganic pyrophosphate. tRNA 3'-terminal CCA addition is required both for tRNA processing and repair. Also involved in tRNA surveillance by mediating tandem CCA addition to generate a CCACCA at the 3' terminus of unstable tRNAs. While stable tRNAs receive only 3'-terminal CCA, unstable tRNAs are marked with CCACCA and rapidly degraded. This Pasteurella multocida (strain Pm70) protein is Multifunctional CCA protein.